A 347-amino-acid chain; its full sequence is Phosphate acyltransferase (347 aa).

The protein belongs to the PlsX family. As to quaternary structure, homodimer. Probably interacts with PlsY.

Its subcellular location is the cytoplasm. It catalyses the reaction a fatty acyl-[ACP] + phosphate = an acyl phosphate + holo-[ACP]. Its pathway is lipid metabolism; phospholipid metabolism. Functionally, catalyzes the reversible formation of acyl-phosphate (acyl-PO(4)) from acyl-[acyl-carrier-protein] (acyl-ACP). This enzyme utilizes acyl-ACP as fatty acyl donor, but not acyl-CoA. The polypeptide is Phosphate acyltransferase (Methylobacillus flagellatus (strain ATCC 51484 / DSM 6875 / VKM B-1610 / KT)).